A 352-amino-acid chain; its full sequence is Ion-translocating oxidoreductase complex subunit D (352 aa).

5 helical membrane-spanning segments follow: residues I20 to G40, G42 to L62, A78 to A109, P123 to L143, and I148 to A168. T187 is modified (FMN phosphoryl threonine). A run of 4 helical transmembrane segments spans residues I214–L234, W242–F262, L267–L287, and L301–G318.

It belongs to the NqrB/RnfD family. The complex is composed of six subunits: RsxA, RsxB, RsxC, RsxD, RsxE and RsxG. The cofactor is FMN.

The protein localises to the cell inner membrane. In terms of biological role, part of a membrane-bound complex that couples electron transfer with translocation of ions across the membrane. Required to maintain the reduced state of SoxR. This chain is Ion-translocating oxidoreductase complex subunit D, found in Shigella flexneri.